Here is a 273-residue protein sequence, read N- to C-terminus: 4-hydroxy-tetrahydrodipicolinate reductase (273 aa).

Residues 12-17 and E38 each bind NAD(+); that span reads GAGGRM. R39 lines the NADP(+) pocket. Residues 102 to 104 and 126 to 129 contribute to the NAD(+) site; these read GTT and AANF. H159 serves as the catalytic Proton donor/acceptor. Position 160 (H160) interacts with (S)-2,3,4,5-tetrahydrodipicolinate. K163 functions as the Proton donor in the catalytic mechanism. 169–170 contacts (S)-2,3,4,5-tetrahydrodipicolinate; that stretch reads GT.

The protein belongs to the DapB family. In terms of assembly, homotetramer.

The protein resides in the cytoplasm. The enzyme catalyses (S)-2,3,4,5-tetrahydrodipicolinate + NAD(+) + H2O = (2S,4S)-4-hydroxy-2,3,4,5-tetrahydrodipicolinate + NADH + H(+). The catalysed reaction is (S)-2,3,4,5-tetrahydrodipicolinate + NADP(+) + H2O = (2S,4S)-4-hydroxy-2,3,4,5-tetrahydrodipicolinate + NADPH + H(+). It functions in the pathway amino-acid biosynthesis; L-lysine biosynthesis via DAP pathway; (S)-tetrahydrodipicolinate from L-aspartate: step 4/4. In terms of biological role, catalyzes the conversion of 4-hydroxy-tetrahydrodipicolinate (HTPA) to tetrahydrodipicolinate. The polypeptide is 4-hydroxy-tetrahydrodipicolinate reductase (Salmonella paratyphi A (strain ATCC 9150 / SARB42)).